Consider the following 117-residue polypeptide: uncharacterized protein (117 aa).

The segment covering 1–12 (MAQNSVSLSAGD) has biased composition (polar residues). Disordered regions lie at residues 1-30 (MAQN…NPSA) and 43-87 (VTRL…SPYP).

This is an uncharacterized protein from Mus musculus (Mouse).